Reading from the N-terminus, the 378-residue chain is tRNA-specific 2-thiouridylase MnmA (378 aa).

Residues 7-14 and Met-33 each bind ATP; that span reads GLSGGVDS. The segment at 102–104 is interaction with target base in tRNA; that stretch reads NPD. The active-site Nucleophile is Cys-107. A disulfide bond links Cys-107 and Cys-209. Gly-132 contacts ATP. The interaction with tRNA stretch occupies residues 159–161; the sequence is KDQ. The active-site Cysteine persulfide intermediate is the Cys-209. The segment at 316 to 317 is interaction with tRNA; that stretch reads RY.

Belongs to the MnmA/TRMU family.

The protein localises to the cytoplasm. It catalyses the reaction S-sulfanyl-L-cysteinyl-[protein] + uridine(34) in tRNA + AH2 + ATP = 2-thiouridine(34) in tRNA + L-cysteinyl-[protein] + A + AMP + diphosphate + H(+). In terms of biological role, catalyzes the 2-thiolation of uridine at the wobble position (U34) of tRNA, leading to the formation of s(2)U34. The sequence is that of tRNA-specific 2-thiouridylase MnmA from Aster yellows witches'-broom phytoplasma (strain AYWB).